The chain runs to 432 residues: Adenylosuccinate synthetase (432 aa).

GTP contacts are provided by residues 13-19 (GDEGKGK) and 41-43 (GHT). Catalysis depends on Asp-14, which acts as the Proton acceptor. Mg(2+) is bound by residues Asp-14 and Gly-41. IMP is bound by residues 14-17 (DEGK), 39-42 (NAGH), Thr-130, Arg-144, Gln-225, Thr-240, and Arg-304. The Proton donor role is filled by His-42. 300-306 (ATTGRSR) serves as a coordination point for substrate. GTP contacts are provided by residues Arg-306, 332 to 334 (KLD), and 415 to 417 (STG).

Belongs to the adenylosuccinate synthetase family. As to quaternary structure, homodimer. Mg(2+) is required as a cofactor.

It is found in the cytoplasm. It carries out the reaction IMP + L-aspartate + GTP = N(6)-(1,2-dicarboxyethyl)-AMP + GDP + phosphate + 2 H(+). Its pathway is purine metabolism; AMP biosynthesis via de novo pathway; AMP from IMP: step 1/2. Its function is as follows. Plays an important role in the de novo pathway of purine nucleotide biosynthesis. Catalyzes the first committed step in the biosynthesis of AMP from IMP. The polypeptide is Adenylosuccinate synthetase (Yersinia pseudotuberculosis serotype O:1b (strain IP 31758)).